A 388-amino-acid chain; its full sequence is Succinate--CoA ligase [ADP-forming] subunit beta (388 aa).

The region spanning 9 to 245 (KELLASYGLP…KSQENERELK (237 aa)) is the ATP-grasp domain. ATP is bound by residues Lys46, 53–55 (GRG), Glu100, Tyr103, and Glu108. Mg(2+)-binding residues include Asn200 and Asp214. Residues Asn265 and 322–324 (GIV) each bind substrate.

The protein belongs to the succinate/malate CoA ligase beta subunit family. In terms of assembly, heterotetramer of two alpha and two beta subunits. It depends on Mg(2+) as a cofactor.

It catalyses the reaction succinate + ATP + CoA = succinyl-CoA + ADP + phosphate. The enzyme catalyses GTP + succinate + CoA = succinyl-CoA + GDP + phosphate. Its pathway is carbohydrate metabolism; tricarboxylic acid cycle; succinate from succinyl-CoA (ligase route): step 1/1. In terms of biological role, succinyl-CoA synthetase functions in the citric acid cycle (TCA), coupling the hydrolysis of succinyl-CoA to the synthesis of either ATP or GTP and thus represents the only step of substrate-level phosphorylation in the TCA. The beta subunit provides nucleotide specificity of the enzyme and binds the substrate succinate, while the binding sites for coenzyme A and phosphate are found in the alpha subunit. This Neisseria meningitidis serogroup A / serotype 4A (strain DSM 15465 / Z2491) protein is Succinate--CoA ligase [ADP-forming] subunit beta.